Here is a 108-residue protein sequence, read N- to C-terminus: Large ribosomal subunit protein uL24 (108 aa).

Belongs to the universal ribosomal protein uL24 family. Part of the 50S ribosomal subunit.

One of two assembly initiator proteins, it binds directly to the 5'-end of the 23S rRNA, where it nucleates assembly of the 50S subunit. Functionally, one of the proteins that surrounds the polypeptide exit tunnel on the outside of the subunit. The chain is Large ribosomal subunit protein uL24 from Pelobacter propionicus (strain DSM 2379 / NBRC 103807 / OttBd1).